The following is a 97-amino-acid chain: Co-chaperonin GroES (97 aa).

It belongs to the GroES chaperonin family. Heptamer of 7 subunits arranged in a ring. Interacts with the chaperonin GroEL.

It localises to the cytoplasm. In terms of biological role, together with the chaperonin GroEL, plays an essential role in assisting protein folding. The GroEL-GroES system forms a nano-cage that allows encapsulation of the non-native substrate proteins and provides a physical environment optimized to promote and accelerate protein folding. GroES binds to the apical surface of the GroEL ring, thereby capping the opening of the GroEL channel. The protein is Co-chaperonin GroES of Pseudomonas fluorescens (strain Pf0-1).